A 509-amino-acid polypeptide reads, in one-letter code: Putative aldehyde dehydrogenase family 7 member A1 homolog (509 aa).

Residue Gly-244–Gly-249 participates in NAD(+) binding. Glu-266 acts as the Proton acceptor in catalysis. Residue Cys-300 is the Nucleophile of the active site.

It belongs to the aldehyde dehydrogenase family. As to quaternary structure, homotetramer.

The catalysed reaction is an aldehyde + NAD(+) + H2O = a carboxylate + NADH + 2 H(+). The chain is Putative aldehyde dehydrogenase family 7 member A1 homolog from Dictyostelium discoideum (Social amoeba).